Here is a 494-residue protein sequence, read N- to C-terminus: Fumigaclavine B O-acetyltransferase easN (494 aa).

It belongs to the fumigaclavine B O-acetyltransferase family. As to quaternary structure, monomer.

The catalysed reaction is fumigaclavine B + acetyl-CoA = fumigaclavine A + CoA. It participates in alkaloid biosynthesis; ergot alkaloid biosynthesis. Fumigaclavine B O-acetyltransferase; part of the gene cluster that mediates the biosynthesis of fumiclavanine C, a fungal ergot alkaloid. DmaW catalyzes the first step of ergot alkaloid biosynthesis by condensing dimethylallyl diphosphate (DMAP) and tryptophan to form 4-dimethylallyl-L-tryptophan. The second step is catalyzed by the methyltransferase easF that methylates 4-dimethylallyl-L-tryptophan in the presence of S-adenosyl-L-methionine, resulting in the formation of 4-dimethylallyl-L-abrine. The catalase easC and the FAD-dependent oxidoreductase easE then transform 4-dimethylallyl-L-abrine to chanoclavine-I which is further oxidized by EasD in the presence of NAD(+), resulting in the formation of chanoclavine-I aldehyde. EasA reduces chanoclavine-I aldehyde to dihydrochanoclavine-I aldehyde that spontaneously dehydrates to form 6,8-dimethyl-6,7-didehydroergoline. EasG then catalyzes the reduction of 6,8-dimethyl-6,7-didehydroergoline to form festuclavine. Hydrolysis of festuclavine by easM then leads to the formation of fumigaclavine B which is in turn acetylated by easN to fumigaclavine A. Finally, easL catalyzes the conversion of fumigaclavine A into fumigaclavine C by attaching a dimethylallyl moiety to C-2 of the indole nucleus. This is Fumigaclavine B O-acetyltransferase easN from Aspergillus fumigatus (strain ATCC MYA-4609 / CBS 101355 / FGSC A1100 / Af293) (Neosartorya fumigata).